A 530-amino-acid polypeptide reads, in one-letter code: Probable phosphoacetylglucosamine mutase (530 aa).

The active-site Phosphoserine intermediate is serine 62. Serine 62, aspartate 278, aspartate 280, and aspartate 282 together coordinate Mg(2+). Substrate is bound by residues 369–371 (EPN), 481–485 (RPSGT), and arginine 490.

Belongs to the phosphohexose mutase family. Requires Mg(2+) as cofactor.

It carries out the reaction N-acetyl-alpha-D-glucosamine 1-phosphate = N-acetyl-D-glucosamine 6-phosphate. It functions in the pathway nucleotide-sugar biosynthesis; UDP-N-acetyl-alpha-D-glucosamine biosynthesis; N-acetyl-alpha-D-glucosamine 1-phosphate from alpha-D-glucosamine 6-phosphate (route I): step 2/2. In terms of biological role, catalyzes the conversion of GlcNAc-6-P into GlcNAc-1-P during the synthesis of uridine diphosphate/UDP-GlcNAc, which is a biosynthetic precursor of chitin and also supplies the amino sugars for N-linked oligosaccharides of glycoproteins. The sequence is that of Probable phosphoacetylglucosamine mutase from Encephalitozoon cuniculi (strain GB-M1) (Microsporidian parasite).